The sequence spans 563 residues: Arginine--tRNA ligase (563 aa).

The 'HIGH' region motif lies at 121–131 (PNIAKPFSIGH).

The protein belongs to the class-I aminoacyl-tRNA synthetase family. Monomer.

It localises to the cytoplasm. It carries out the reaction tRNA(Arg) + L-arginine + ATP = L-arginyl-tRNA(Arg) + AMP + diphosphate. This chain is Arginine--tRNA ligase, found in Streptococcus agalactiae serotype Ia (strain ATCC 27591 / A909 / CDC SS700).